Reading from the N-terminus, the 189-residue chain is Crossover junction endodeoxyribonuclease RuvC (189 aa).

Active-site residues include Asp-12, Glu-72, and Asp-147. 3 residues coordinate Mg(2+): Asp-12, Glu-72, and Asp-147.

This sequence belongs to the RuvC family. As to quaternary structure, homodimer which binds Holliday junction (HJ) DNA. The HJ becomes 2-fold symmetrical on binding to RuvC with unstacked arms; it has a different conformation from HJ DNA in complex with RuvA. In the full resolvosome a probable DNA-RuvA(4)-RuvB(12)-RuvC(2) complex forms which resolves the HJ. Mg(2+) serves as cofactor.

It localises to the cytoplasm. The enzyme catalyses Endonucleolytic cleavage at a junction such as a reciprocal single-stranded crossover between two homologous DNA duplexes (Holliday junction).. Functionally, the RuvA-RuvB-RuvC complex processes Holliday junction (HJ) DNA during genetic recombination and DNA repair. Endonuclease that resolves HJ intermediates. Cleaves cruciform DNA by making single-stranded nicks across the HJ at symmetrical positions within the homologous arms, yielding a 5'-phosphate and a 3'-hydroxyl group; requires a central core of homology in the junction. The consensus cleavage sequence is 5'-(A/T)TT(C/G)-3'. Cleavage occurs on the 3'-side of the TT dinucleotide at the point of strand exchange. HJ branch migration catalyzed by RuvA-RuvB allows RuvC to scan DNA until it finds its consensus sequence, where it cleaves and resolves the cruciform DNA. In Porphyromonas gingivalis (strain ATCC BAA-308 / W83), this protein is Crossover junction endodeoxyribonuclease RuvC.